We begin with the raw amino-acid sequence, 395 residues long: Protein phosphatase methylesterase 1 (395 aa).

Active-site residues include Ser194, Asp222, and His348.

Belongs to the AB hydrolase superfamily.

The catalysed reaction is [phosphatase 2A protein]-C-terminal L-leucine methyl ester + H2O = [phosphatase 2A protein]-C-terminal L-leucine + methanol + H(+). In terms of biological role, demethylates proteins that have been reversibly carboxymethylated. Demethylates the phosphatase PP2A catalytic subunit. The protein is Protein phosphatase methylesterase 1 (PPE1) of Kluyveromyces lactis (strain ATCC 8585 / CBS 2359 / DSM 70799 / NBRC 1267 / NRRL Y-1140 / WM37) (Yeast).